We begin with the raw amino-acid sequence, 442 residues long: Glutamate synthase large subunit-like protein (442 aa).

Residues 108-133 (LGRGATASGTSTTTGDGGMTDEERGH) form a disordered region. The segment covering 109–121 (GRGATASGTSTTT) has biased composition (low complexity).

Belongs to the glutamate synthase family.

The polypeptide is Glutamate synthase large subunit-like protein (glxD) (Rhizobium meliloti (strain 1021) (Ensifer meliloti)).